Reading from the N-terminus, the 140-residue chain is Ergosterol biosynthetic protein 28 homolog (140 aa).

A run of 4 helical transmembrane segments spans residues 4-24 (FLNV…GNTL), 52-72 (TFGI…IDIH), 79-99 (ITLW…FVYG), and 105-125 (IGVL…LVGL).

Belongs to the ERG28 family. In terms of tissue distribution, ubiquitous; strongly expressed in testis and some cancer cell lines.

It localises to the endoplasmic reticulum membrane. The sequence is that of Ergosterol biosynthetic protein 28 homolog from Homo sapiens (Human).